Consider the following 310-residue polypeptide: Isoflavone reductase homolog A622 (310 aa).

NADP(+)-binding positions include 13-19 (GGTGYIG), arginine 38, and lysine 47. Lysine 135 (proton acceptor) is an active-site residue. Arginine 139 provides a ligand contact to NADP(+).

This sequence belongs to the NmrA-type oxidoreductase family. Isoflavone reductase subfamily. Monomer.

It is found in the cytoplasm. It functions in the pathway alkaloid biosynthesis; nicotine biosynthesis. Its function is as follows. NADPH-binding protein. Involved in the biosynthesis of pyridine alkaloid natural products, leading mainly to the production of anabasine, anatabine, nicotine and nornicotine, effective deterrents against herbivores with antiparasitic and pesticide properties (neurotoxins); nornicotine serves as the precursor in the synthesis of the carcinogen compound N'-nitrosonornicotine (NNN). Reductase involved in a late step of tobacco alkaloid biosynthesis. Triggers either the formation of a nicotinic acid-derived precursor or the final condensation reaction of tobacco alkaloids. The protein is Isoflavone reductase homolog A622 of Nicotiana glauca (Glaucous tobacco).